Reading from the N-terminus, the 349-residue chain is Isopentenyl-diphosphate delta-isomerase (349 aa).

Position 7-8 (7-8) interacts with substrate; that stretch reads RK. Residues Ser65, 66-68, Ser96, and Asn124 contribute to the FMN site; that span reads SMT. Substrate is bound at residue 96-98; that stretch reads SQR. Gln159 provides a ligand contact to substrate. Position 160 (Glu160) interacts with Mg(2+). FMN contacts are provided by residues Lys191, Thr221, 271-273, and 292-293; these read GIR and AA.

Belongs to the IPP isomerase type 2 family. In terms of assembly, homooctamer. Dimer of tetramers. Requires FMN as cofactor. The cofactor is NADPH. It depends on Mg(2+) as a cofactor.

It localises to the cytoplasm. The catalysed reaction is isopentenyl diphosphate = dimethylallyl diphosphate. Involved in the biosynthesis of isoprenoids. Catalyzes the 1,3-allylic rearrangement of the homoallylic substrate isopentenyl (IPP) to its allylic isomer, dimethylallyl diphosphate (DMAPP). The sequence is that of Isopentenyl-diphosphate delta-isomerase from Synechocystis sp. (strain ATCC 27184 / PCC 6803 / Kazusa).